The chain runs to 87 residues: AKGDTRRCGYLMMRGCRGDTTATRAWGFNYEEKKCQQETVICGTGGAPRNAFETKQDCDALCEGYSGPQYSMQEMLQHLKENAKKTG.

One can recognise a BPTI/Kunitz inhibitor domain in the interval 8-62 (CGYLMMRGCRGDTTATRAWGFNYEEKKCQQETVICGTGGAPRNAFETKQDCDALC). Cystine bridges form between Cys-8-Cys-62, Cys-16-Cys-42, and Cys-35-Cys-58. The Cell attachment site signature appears at 17–19 (RGD).

In terms of processing, the N-terminus is blocked. In terms of tissue distribution, expressed in salivary glands.

It localises to the cytoplasmic vesicle. Its subcellular location is the secretory vesicle. It is found in the secreted. In terms of biological role, tick salivary platelet aggregation inhibitor that plays an important part in the anti-hemostatic strategy of ticks. Inhibits platelet aggregation induced by ADP (IC(50)~150 nM), collagen, and platelet activating factor (PAF). Acts by binding to platelet membrane glycoprotein IIb-IIIa (ITGA2B/ITGB3) in a metal ion dependent manner. Does not inhibit aggregation induced by ristocecin, an agonist that aggregates platelets independently from the glycoprotein IIb-IIIa (ITGA2B/ITGB3). In contrast to other tick platelet aggregation inhibitors, this protein does not protect ITGA2B/ITGB3 from dissociation under SDS condition, suggesting it may dissocate much faster than its orthologs. In Argas monolakensis (Mono lake bird tick), this protein is Monogrin 1.